Reading from the N-terminus, the 244-residue chain is MSKLDLNALNELPKVDRILALAETNAQLEKLDAEGRVAWALDNLPGEYVLSSSFGIQAAVSLHLVNQIRPDIPVILTDTGYLFPETYRFIDELTDKLKLNLKVYRATESAAWQEARYGKLWEQGVEGIEKYNDINKVEPMNRALKELNAQTWFAGLRREQSGSRANLPVLAIQRGVFKVLPIIDWDNRTIYQYLQKHGLKYHPLWDEGYLSVGDTHTTRKWEPGMAEEETRFFGLKRECGLHEG.

The Nucleophile; cysteine thiosulfonate intermediate role is filled by Cys-239.

Belongs to the PAPS reductase family. CysH subfamily.

It is found in the cytoplasm. It carries out the reaction [thioredoxin]-disulfide + sulfite + adenosine 3',5'-bisphosphate + 2 H(+) = [thioredoxin]-dithiol + 3'-phosphoadenylyl sulfate. The protein operates within sulfur metabolism; hydrogen sulfide biosynthesis; sulfite from sulfate: step 3/3. Functionally, catalyzes the formation of sulfite from phosphoadenosine 5'-phosphosulfate (PAPS) using thioredoxin as an electron donor. The protein is Phosphoadenosine 5'-phosphosulfate reductase of Escherichia coli O6:K15:H31 (strain 536 / UPEC).